The primary structure comprises 331 residues: Pyruvate dehydrogenase E1 component subunit beta (331 aa).

Glu-60 serves as a coordination point for thiamine diphosphate. Residues Leu-113, Ala-161, Ile-162, Asp-164, and Asn-166 each coordinate K(+).

Heterodimer of an alpha and a beta chain. Thiamine diphosphate is required as a cofactor.

The protein resides in the plastid. It localises to the chloroplast. The catalysed reaction is N(6)-[(R)-lipoyl]-L-lysyl-[protein] + pyruvate + H(+) = N(6)-[(R)-S(8)-acetyldihydrolipoyl]-L-lysyl-[protein] + CO2. Functionally, the pyruvate dehydrogenase complex catalyzes the overall conversion of pyruvate to acetyl-CoA and CO(2). It contains multiple copies of three enzymatic components: pyruvate dehydrogenase (E1), dihydrolipoamide acetyltransferase (E2) and lipoamide dehydrogenase (E3). In Porphyra purpurea (Red seaweed), this protein is Pyruvate dehydrogenase E1 component subunit beta (pdhB).